The sequence spans 195 residues: L-rhamnose-binding lectin CSL3 (195 aa).

2 SUEL-type lectin domains span residues 1–95 (AISI…YSCV) and 105–195 (ICEG…YTCD).

Functionally, L-rhamnose binding lectin. Has hemagglutinating activity towards rabbit erythrocytes, human type A erythrocytes, human type B erythrocytes, human type O erythrocytes and sheep erythrocytes. Hemagglutinating activity is inhibited by smooth-type lipopolysaccharide (LPS) from S.flexneri 1A, A.salmonicida and E.coli K12, but not by rough-type LPS from S.flexneri, E.coli K12 and E.coli EH100. Agglutinates E.coli K12 and B.subtilis. This chain is L-rhamnose-binding lectin CSL3, found in Oncorhynchus keta (Chum salmon).